Here is a 1028-residue protein sequence, read N- to C-terminus: MQAQRYRLIEQGNTIMDIDNEILRYWNDHAINEKIFKKEGTKKFVFLEGPPTANGRPHIGHAMTRTIKDIVLRYNTMTGHKIYRRYGGWDCHGLPVELEAEKYFGFKTKSDIINYGVEKFNSYCRDSVFRYIDEWKTVDQIIGFSIDHSGDYITLRNEYIESEWYVLKYIYENGLLYKDYTVVPYCPRCETSLSSHEVAQGYKDVKDPSVYVRFKEKGSENTYFVAWTTTPWTLPSNEFLVVNPDIEYSLIEYNNAKYYVASSRAQYIFKDFKVLKKMKGFELAGKGYEQLLPFLDPPAGALRVVTGDFVTDIDGSGIVHAAPAFGSDDYQIGKRENVPILNPVDKNGRFSDERLPWYGKKVREANEDIIVYLKNNGLLIKSEKYEHSYPFCYRCDTPLLYYPLDAWFIRVSSVRDKLVENNEKIRWKPDYLKHGRFGNFLDEAKDWNLSRDRFWGTPLPVWRCRNNHVRFIGSRKEIEEMGATVPQDLHRPYIDEVKFVCPDCGEEMRREPYVIDTWFDSGSATYAAMHYPFEDNFDPSSDLPVSFITEAIDQTRGWFYVLHVISTIMFNKNAYDSALSISFILDEQGRKMSKSKGNSVFALDYLKQVAPDSLRLFFLYGAPWKSKNLDRKIIDEVSRRVISTLLNVYSFFAYNANIDGFEFKGILEAKDTLDKWLISKINTFIIESRRAYDDLDFHEVVRLSMDFVDNLSNFYLRLSRRRFWAEDVTEDKLAAYSTLYTAIMTCSKVLAPIVPFVSDYLYLSLHGPYESIHLDSFPEPDTSKIDHDLEKRMDQAYSVIETVRRIRQEINIKGRQPVKEILLSGNIDPEIIPVVSQEVNAKEIRIVSSEQRPLKYTVDLKMETAAPILRSSVNSVREALKSIDGKAAFDAVQNGGKLRVLDHELTGEMLNISTIPDPDYGYSRDEKNGIDVFVNKRIDRNEYLEGLAREIVRRIQLMRKEMNLDYTDRINVWIDPVGDFSDAIDKFESYIKAETQCDSLNVGHTDDLRKWEIGDETIGIRIEKVVPK.

Residues 51–61 (PTANGRPHIGH) carry the 'HIGH' region motif. The 'KMSKS' region motif lies at 591–595 (KMSKS). Lys-594 is a binding site for ATP.

It belongs to the class-I aminoacyl-tRNA synthetase family. IleS type 2 subfamily. As to quaternary structure, monomer. The cofactor is Zn(2+).

It localises to the cytoplasm. It catalyses the reaction tRNA(Ile) + L-isoleucine + ATP = L-isoleucyl-tRNA(Ile) + AMP + diphosphate. Catalyzes the attachment of isoleucine to tRNA(Ile). As IleRS can inadvertently accommodate and process structurally similar amino acids such as valine, to avoid such errors it has two additional distinct tRNA(Ile)-dependent editing activities. One activity is designated as 'pretransfer' editing and involves the hydrolysis of activated Val-AMP. The other activity is designated 'posttransfer' editing and involves deacylation of mischarged Val-tRNA(Ile). This Thermoplasma volcanium (strain ATCC 51530 / DSM 4299 / JCM 9571 / NBRC 15438 / GSS1) protein is Isoleucine--tRNA ligase.